Here is a 417-residue protein sequence, read N- to C-terminus: Sulfate adenylyltransferase (417 aa).

The protein belongs to the sulfate adenylyltransferase family.

The catalysed reaction is sulfate + ATP + H(+) = adenosine 5'-phosphosulfate + diphosphate. Its pathway is sulfur metabolism; hydrogen sulfide biosynthesis; sulfite from sulfate: step 1/3. This chain is Sulfate adenylyltransferase, found in Psychrobacter cryohalolentis (strain ATCC BAA-1226 / DSM 17306 / VKM B-2378 / K5).